We begin with the raw amino-acid sequence, 482 residues long: tRNA sulfurtransferase (482 aa).

Positions 61–165 constitute a THUMP domain; it reads DLVRDALTRI…DDRLLLVRGR (105 aa). Residues 183–184, lysine 265, glycine 287, and glutamine 296 contribute to the ATP site; that span reads LI. The cysteines at positions 344 and 456 are disulfide-linked. The region spanning 404–482 is the Rhodanese domain; that stretch reads LAEGDVVLDI…GYDNVRVYRP (79 aa). The Cysteine persulfide intermediate role is filled by cysteine 456.

It belongs to the ThiI family.

It is found in the cytoplasm. The catalysed reaction is [ThiI sulfur-carrier protein]-S-sulfanyl-L-cysteine + a uridine in tRNA + 2 reduced [2Fe-2S]-[ferredoxin] + ATP + H(+) = [ThiI sulfur-carrier protein]-L-cysteine + a 4-thiouridine in tRNA + 2 oxidized [2Fe-2S]-[ferredoxin] + AMP + diphosphate. The enzyme catalyses [ThiS sulfur-carrier protein]-C-terminal Gly-Gly-AMP + S-sulfanyl-L-cysteinyl-[cysteine desulfurase] + AH2 = [ThiS sulfur-carrier protein]-C-terminal-Gly-aminoethanethioate + L-cysteinyl-[cysteine desulfurase] + A + AMP + 2 H(+). Its pathway is cofactor biosynthesis; thiamine diphosphate biosynthesis. Functionally, catalyzes the ATP-dependent transfer of a sulfur to tRNA to produce 4-thiouridine in position 8 of tRNAs, which functions as a near-UV photosensor. Also catalyzes the transfer of sulfur to the sulfur carrier protein ThiS, forming ThiS-thiocarboxylate. This is a step in the synthesis of thiazole, in the thiamine biosynthesis pathway. The sulfur is donated as persulfide by IscS. The polypeptide is tRNA sulfurtransferase (Edwardsiella ictaluri (strain 93-146)).